A 250-amino-acid polypeptide reads, in one-letter code: 5'-nucleotidase SurE (250 aa).

A divalent metal cation-binding residues include D9, D10, S40, and N92.

The protein belongs to the SurE nucleotidase family. A divalent metal cation is required as a cofactor.

It localises to the cytoplasm. The enzyme catalyses a ribonucleoside 5'-phosphate + H2O = a ribonucleoside + phosphate. In terms of biological role, nucleotidase that shows phosphatase activity on nucleoside 5'-monophosphates. In Shewanella pealeana (strain ATCC 700345 / ANG-SQ1), this protein is 5'-nucleotidase SurE.